Consider the following 134-residue polypeptide: UPF0719 transmembrane protein YshE (134 aa).

Transmembrane regions (helical) follow at residues 10–30 (VEIAAYYSVAVLCLVLFLTVF), 48–68 (AVAMATGGKILGIANVFQHSI), 78–98 (IGWGVYGFVMLLISYFIFEFL), and 114–134 (AVGFISFVISVGLSFVVAAGI).

Belongs to the UPF0719 family.

The protein localises to the cell membrane. The sequence is that of UPF0719 transmembrane protein YshE (yshE) from Bacillus subtilis (strain 168).